The chain runs to 397 residues: Flavohemoprotein (397 aa).

The region spanning serine 4 to alanine 140 is the Globin domain. Histidine 87 is a heme b binding site. Catalysis depends on charge relay system residues tyrosine 97 and glutamate 139. The interval glycine 151–alanine 397 is reductase. The FAD-binding FR-type domain occupies isoleucine 154–proline 258. FAD-binding positions include tyrosine 192 and arginine 207 to serine 210. Glycine 271–proline 276 contacts NADP(+). Phenylalanine 387 to proline 390 is an FAD binding site.

The protein belongs to the globin family. Two-domain flavohemoproteins subfamily. This sequence in the C-terminal section; belongs to the flavoprotein pyridine nucleotide cytochrome reductase family. It depends on heme b as a cofactor. FAD serves as cofactor.

It carries out the reaction 2 nitric oxide + NADPH + 2 O2 = 2 nitrate + NADP(+) + H(+). The enzyme catalyses 2 nitric oxide + NADH + 2 O2 = 2 nitrate + NAD(+) + H(+). In terms of biological role, is involved in NO detoxification in an aerobic process, termed nitric oxide dioxygenase (NOD) reaction that utilizes O(2) and NAD(P)H to convert NO to nitrate, which protects the bacterium from various noxious nitrogen compounds. Therefore, plays a central role in the inducible response to nitrosative stress. In Xylella fastidiosa (strain 9a5c), this protein is Flavohemoprotein.